Here is a 62-residue protein sequence, read N- to C-terminus: UPF0434 protein Smed_3047 (62 aa).

It belongs to the UPF0434 family.

The protein is UPF0434 protein Smed_3047 of Sinorhizobium medicae (strain WSM419) (Ensifer medicae).